Reading from the N-terminus, the 370-residue chain is Ig heavy chain C region (370 aa).

3 consecutive Ig-like domains span residues 40-134 (PTVI…RNIT), 145-237 (PAIK…DSIH), and 247-347 (PSVS…RTVN). Asn-98, Asn-132, Asn-177, Asn-343, Asn-347, and Asn-357 each carry an N-linked (GlcNAc...) asparagine glycan.

This Heterodontus francisci (Horn shark) protein is Ig heavy chain C region.